Here is a 525-residue protein sequence, read N- to C-terminus: ATP synthase subunit alpha (525 aa).

171 to 178 contributes to the ATP binding site; that stretch reads GDRQTGKS.

It belongs to the ATPase alpha/beta chains family. F-type ATPases have 2 components, CF(1) - the catalytic core - and CF(0) - the membrane proton channel. CF(1) has five subunits: alpha(3), beta(3), gamma(1), delta(1), epsilon(1). CF(0) has three main subunits: a(1), b(2) and c(9-12). The alpha and beta chains form an alternating ring which encloses part of the gamma chain. CF(1) is attached to CF(0) by a central stalk formed by the gamma and epsilon chains, while a peripheral stalk is formed by the delta and b chains.

It is found in the cell inner membrane. The catalysed reaction is ATP + H2O + 4 H(+)(in) = ADP + phosphate + 5 H(+)(out). Produces ATP from ADP in the presence of a proton gradient across the membrane. The alpha chain is a regulatory subunit. The polypeptide is ATP synthase subunit alpha (Flavobacterium johnsoniae (strain ATCC 17061 / DSM 2064 / JCM 8514 / BCRC 14874 / CCUG 350202 / NBRC 14942 / NCIMB 11054 / UW101) (Cytophaga johnsonae)).